The chain runs to 509 residues: Cytochrome P450 monooxygenase CYP512U6 (509 aa).

A helical membrane pass occupies residues 12–29; it reads VFACVAVVIAIYAVRWYT. Residue C446 participates in heme binding.

The protein belongs to the cytochrome P450 family. Requires heme as cofactor.

Its subcellular location is the membrane. It catalyses the reaction ganoderate DM + reduced [NADPH--hemoprotein reductase] + O2 = hainanate A + oxidized [NADPH--hemoprotein reductase] + H2O + H(+). The enzyme catalyses ganoderate TR + reduced [NADPH--hemoprotein reductase] + O2 = ganoderate Jc + oxidized [NADPH--hemoprotein reductase] + H2O + H(+). It participates in secondary metabolite biosynthesis; terpenoid biosynthesis. Its function is as follows. Cytochrome P450 monooxygenase that hydroxylates the ganoderic acids DM and TR at the C-23 position to produce hainanic acid A and ganoderic acid Jc, respectively. In Ganoderma lucidum (Ling zhi medicinal fungus), this protein is Cytochrome P450 monooxygenase CYP512U6.